The chain runs to 504 residues: MTQTNGFDALHAHAQRLRGAAIPALLAAEPERPTQYAWQVGPLYFNFARQKYDRAALDALFAIARERDLAGAFQRLFRGEQVNVTEQRAALHTALRGDLTDAPVASEAYATAAEVRQRMGALIQQLEATDVTDIVSVGIGGSDLGPRLVADALRPVSGARLRVHFVSNVDGAAMQRTLATLDPARTAGILISKTFGTQETLLNGSILHAWLGGSERLYAVSANPERAAKAFDIAPGRVLPMWDWVGGRYSLWSAVGFPIALAIGFERFEQLLEGAAQFDAHALNTPLEENVAVLHGLTAVWNRNLLGSATHAVMTYDQRLALLPAYLQQLVMESLGKRVKLDGSTVDSDTVSVWWGGAGTDVQHSFFQALHQGTSVVPADFIGTVHNDDPYAENHVALMANVLAQTEALANGQDSSDPHRSYPGGRPSTVILLDALTPQALGALISMYEHSVYVQSVMWGINAFDQFGVELGKQLASQLLPALKGESADVADPVTRELLSKLRG.

The active-site Proton donor is Glu333. Catalysis depends on residues His364 and Lys473.

It belongs to the GPI family.

It localises to the cytoplasm. It carries out the reaction alpha-D-glucose 6-phosphate = beta-D-fructose 6-phosphate. Its pathway is carbohydrate biosynthesis; gluconeogenesis. It participates in carbohydrate degradation; glycolysis; D-glyceraldehyde 3-phosphate and glycerone phosphate from D-glucose: step 2/4. Catalyzes the reversible isomerization of glucose-6-phosphate to fructose-6-phosphate. This chain is Glucose-6-phosphate isomerase, found in Xanthomonas oryzae pv. oryzae (strain PXO99A).